A 341-amino-acid polypeptide reads, in one-letter code: Phenylalanine--tRNA ligase alpha subunit (341 aa).

Glu255 is a binding site for Mg(2+).

Belongs to the class-II aminoacyl-tRNA synthetase family. Phe-tRNA synthetase alpha subunit type 1 subfamily. In terms of assembly, tetramer of two alpha and two beta subunits. Mg(2+) is required as a cofactor.

The protein resides in the cytoplasm. It catalyses the reaction tRNA(Phe) + L-phenylalanine + ATP = L-phenylalanyl-tRNA(Phe) + AMP + diphosphate + H(+). This is Phenylalanine--tRNA ligase alpha subunit from Natranaerobius thermophilus (strain ATCC BAA-1301 / DSM 18059 / JW/NM-WN-LF).